A 130-amino-acid chain; its full sequence is Holo-[acyl-carrier-protein] synthase (130 aa).

2 residues coordinate Mg(2+): Asp9 and Glu58.

It belongs to the P-Pant transferase superfamily. AcpS family. Requires Mg(2+) as cofactor.

The protein localises to the cytoplasm. It catalyses the reaction apo-[ACP] + CoA = holo-[ACP] + adenosine 3',5'-bisphosphate + H(+). Transfers the 4'-phosphopantetheine moiety from coenzyme A to a Ser of acyl-carrier-protein. This is Holo-[acyl-carrier-protein] synthase from Mycobacterium sp. (strain JLS).